The sequence spans 150 residues: MLGTALRRCAVAAASRAGSRGLLHPTPVPGPTAAIQSIRCYSHGSHETDEEFDARWVTYFNKPDIDAWELRKGMNTLVGYDLVPEPKIIDAALRACRRLNDFASAVRILEVVKDKAGPHKEIYPYVIQELRPTLNELGISTPEELGLDKV.

Residues 1-41 (MLGTALRRCAVAAASRAGSRGLLHPTPVPGPTAAIQSIRCY) constitute a mitochondrion transit peptide. Residues 2 to 17 (LGTALRRCAVAAASRA) carry the SIFI-degron motif. Residues Lys87 and Lys113 each carry the N6-acetyllysine modification. Thr141 bears the Phosphothreonine mark.

This sequence belongs to the cytochrome c oxidase subunit 5A family. As to quaternary structure, component of the cytochrome c oxidase (complex IV, CIV), a multisubunit enzyme composed of 14 subunits. The complex is composed of a catalytic core of 3 subunits MT-CO1, MT-CO2 and MT-CO3, encoded in the mitochondrial DNA, and 11 supernumerary subunits COX4I, COX5A, COX5B, COX6A, COX6B, COX6C, COX7A, COX7B, COX7C, COX8 and NDUFA4, which are encoded in the nuclear genome. The complex exists as a monomer or a dimer and forms supercomplexes (SCs) in the inner mitochondrial membrane with NADH-ubiquinone oxidoreductase (complex I, CI) and ubiquinol-cytochrome c oxidoreductase (cytochrome b-c1 complex, complex III, CIII), resulting in different assemblies (supercomplex SCI(1)III(2)IV(1) and megacomplex MCI(2)III(2)IV(2)). Interacts with AFG1L. Interacts with RAB5IF. In terms of processing, in response to mitochondrial stress, the precursor protein is ubiquitinated by the SIFI complex in the cytoplasm before mitochondrial import, leading to its degradation. Within the SIFI complex, UBR4 initiates ubiquitin chain that are further elongated or branched by KCMF1.

The protein localises to the mitochondrion inner membrane. Its pathway is energy metabolism; oxidative phosphorylation. In terms of biological role, component of the cytochrome c oxidase, the last enzyme in the mitochondrial electron transport chain which drives oxidative phosphorylation. The respiratory chain contains 3 multisubunit complexes succinate dehydrogenase (complex II, CII), ubiquinol-cytochrome c oxidoreductase (cytochrome b-c1 complex, complex III, CIII) and cytochrome c oxidase (complex IV, CIV), that cooperate to transfer electrons derived from NADH and succinate to molecular oxygen, creating an electrochemical gradient over the inner membrane that drives transmembrane transport and the ATP synthase. Cytochrome c oxidase is the component of the respiratory chain that catalyzes the reduction of oxygen to water. Electrons originating from reduced cytochrome c in the intermembrane space (IMS) are transferred via the dinuclear copper A center (CU(A)) of subunit 2 and heme A of subunit 1 to the active site in subunit 1, a binuclear center (BNC) formed by heme A3 and copper B (CU(B)). The BNC reduces molecular oxygen to 2 water molecules using 4 electrons from cytochrome c in the IMS and 4 protons from the mitochondrial matrix. This Otolemur crassicaudatus (Brown greater galago) protein is Cytochrome c oxidase subunit 5A, mitochondrial (COX5A).